The following is a 45-amino-acid chain: Photosystem II reaction center protein K (45 aa).

The propeptide occupies Met-1 to Ala-8. A helical membrane pass occupies residues Leu-24–Phe-44.

Belongs to the PsbK family. In terms of assembly, PSII is composed of 1 copy each of membrane proteins PsbA, PsbB, PsbC, PsbD, PsbE, PsbF, PsbH, PsbI, PsbJ, PsbK, PsbL, PsbM, PsbT, PsbX, PsbY, PsbZ, Psb30/Ycf12, peripheral proteins PsbO, CyanoQ (PsbQ), PsbU, PsbV and a large number of cofactors. It forms dimeric complexes.

The protein resides in the cellular thylakoid membrane. Its function is as follows. One of the components of the core complex of photosystem II (PSII). PSII is a light-driven water:plastoquinone oxidoreductase that uses light energy to abstract electrons from H(2)O, generating O(2) and a proton gradient subsequently used for ATP formation. It consists of a core antenna complex that captures photons, and an electron transfer chain that converts photonic excitation into a charge separation. This Gloeothece citriformis (strain PCC 7424) (Cyanothece sp. (strain PCC 7424)) protein is Photosystem II reaction center protein K.